The sequence spans 915 residues: MAEIEENTVFEINDFTIVTDMEHFGAAFEGILQKYEFSSRRPCLSNDVKYRLIVTDTNMISIGENKLRIELLQPVPASSNPSNDVEFVEAPKDEIEEDAHVIPFTVAEEVANLKHGFEVTDSFLLKFGIRECIIISPNDSSGTFTDENQVNTVMGNIKTILHSSRCEVPVFCYIKDQSLDMISGYASDGNSTYNFSSVVLRNINRRHCSMTDLLYLFKEHLGASISAFHEEVRMSSRFTHVVPLKQSKYFRNHTVETFGLLATGPTSSLPFDILEIAATWRFFRENSLTENHSHSDFDINYSSYWNIKMKSTKSSLLGVLDEILGVYREDTRKAIRSDLNCALILGKHYTQKELPNAFQKLTINSASEVKIGKHAETEDSGTNGPMPPALMKSWVNFIFNEAESDNESLAHELNMLNAASMSENQLSDDELVNNVKLDTLFNYKNPKSANTFLAPYKCAKKSTVTWRLAIALANARVFMSDQPRAEPQLWVEFLLKLREKYEKMETVEKVYNGIDHLQCSFSQKMQMLQLCIDARQKRHRMLDSAHSANNSDEFFDANESFNAETILEPNNEGRLKLFGLNLVEIPDVPMYIPVTQDACPLTDEMIDARNEHLFSLDEEDRVHLQMELVKSDMQSFKAANAGAVFADFLRWHSPKDYDEKTNTISERMLISNNVWVRSWEAALPIPVANQARIFNDTKIAEEILEIFNNATLDQVREWMKPTVFAATLERLTEIESSYGVSEEKQKQRTKTAKILANATLNNTPMDYNEISKYCSQIEMIHNMKVHLMQLFENAREKMHPPYPSETDVQSAIKQLVNIAVHNLWDNSTDEEPTFVIKPQDPIGRAIAVIGKLDELTEQQLINGHRKEYIFNWKHSCPSTTTIPMTHRMYADLRSDKHSLYFSMANDCNFSNSSYL.

Belongs to the Rab3-GAP catalytic subunit family. As to quaternary structure, the Rab3 GTPase-activating complex is a heterodimer composed of rbg-1 and rbg-2.

Its subcellular location is the cytoplasm. In terms of biological role, probable catalytic subunit of a GTPase activating protein that has specificity for Rab3 subfamily. Rab3 proteins are involved in regulated exocytosis of neurotransmitters and hormones. Specifically converts active Rab3-GTP to the inactive form Rab3-GDP. In Caenorhabditis elegans, this protein is Rab3 GTPase-activating protein catalytic subunit (rbg-1).